Reading from the N-terminus, the 233-residue chain is 2-C-methyl-D-erythritol 4-phosphate cytidylyltransferase (233 aa).

It belongs to the IspD/TarI cytidylyltransferase family. IspD subfamily.

The catalysed reaction is 2-C-methyl-D-erythritol 4-phosphate + CTP + H(+) = 4-CDP-2-C-methyl-D-erythritol + diphosphate. It participates in isoprenoid biosynthesis; isopentenyl diphosphate biosynthesis via DXP pathway; isopentenyl diphosphate from 1-deoxy-D-xylulose 5-phosphate: step 2/6. In terms of biological role, catalyzes the formation of 4-diphosphocytidyl-2-C-methyl-D-erythritol from CTP and 2-C-methyl-D-erythritol 4-phosphate (MEP). This chain is 2-C-methyl-D-erythritol 4-phosphate cytidylyltransferase, found in Carboxydothermus hydrogenoformans (strain ATCC BAA-161 / DSM 6008 / Z-2901).